Consider the following 371-residue polypeptide: Glycosyltransferase 8 domain-containing protein 1 (371 aa).

The Cytoplasmic portion of the chain corresponds to 1–7; the sequence is MSFRKVN. A helical; Signal-anchor for type II membrane protein transmembrane segment spans residues 8–28; sequence IIILVLAVALFLLVLHHNFLS. The Lumenal portion of the chain corresponds to 29 to 371; the sequence is LSSLLRNEVT…RRYTEISNIK (343 aa). N-linked (GlcNAc...) asparagine glycans are attached at residues asparagine 249 and asparagine 257.

This sequence belongs to the glycosyltransferase 8 family.

It is found in the membrane. The sequence is that of Glycosyltransferase 8 domain-containing protein 1 (GLT8D1) from Homo sapiens (Human).